Reading from the N-terminus, the 348-residue chain is Holliday junction branch migration complex subunit RuvB (348 aa).

The interval 4–184 (TDRLIAASGR…FGIVQRLEFY (181 aa)) is large ATPase domain (RuvB-L). Residues isoleucine 23, arginine 24, glycine 65, lysine 68, threonine 69, threonine 70, 131 to 133 (EDF), arginine 174, tyrosine 184, and arginine 221 each bind ATP. Threonine 69 contacts Mg(2+). A small ATPAse domain (RuvB-S) region spans residues 185–255 (SNKDLATIVS…VADMALNLLD (71 aa)). The interval 258–348 (ERGFDHSDRR…GGEYAAQDDE (91 aa)) is head domain (RuvB-H). The DNA site is built by arginine 294, arginine 313, and arginine 318.

The protein belongs to the RuvB family. Homohexamer. Forms an RuvA(8)-RuvB(12)-Holliday junction (HJ) complex. HJ DNA is sandwiched between 2 RuvA tetramers; dsDNA enters through RuvA and exits via RuvB. An RuvB hexamer assembles on each DNA strand where it exits the tetramer. Each RuvB hexamer is contacted by two RuvA subunits (via domain III) on 2 adjacent RuvB subunits; this complex drives branch migration. In the full resolvosome a probable DNA-RuvA(4)-RuvB(12)-RuvC(2) complex forms which resolves the HJ.

Its subcellular location is the cytoplasm. It catalyses the reaction ATP + H2O = ADP + phosphate + H(+). Its function is as follows. The RuvA-RuvB-RuvC complex processes Holliday junction (HJ) DNA during genetic recombination and DNA repair, while the RuvA-RuvB complex plays an important role in the rescue of blocked DNA replication forks via replication fork reversal (RFR). RuvA specifically binds to HJ cruciform DNA, conferring on it an open structure. The RuvB hexamer acts as an ATP-dependent pump, pulling dsDNA into and through the RuvAB complex. RuvB forms 2 homohexamers on either side of HJ DNA bound by 1 or 2 RuvA tetramers; 4 subunits per hexamer contact DNA at a time. Coordinated motions by a converter formed by DNA-disengaged RuvB subunits stimulates ATP hydrolysis and nucleotide exchange. Immobilization of the converter enables RuvB to convert the ATP-contained energy into a lever motion, pulling 2 nucleotides of DNA out of the RuvA tetramer per ATP hydrolyzed, thus driving DNA branch migration. The RuvB motors rotate together with the DNA substrate, which together with the progressing nucleotide cycle form the mechanistic basis for DNA recombination by continuous HJ branch migration. Branch migration allows RuvC to scan DNA until it finds its consensus sequence, where it cleaves and resolves cruciform DNA. In Pseudomonas entomophila (strain L48), this protein is Holliday junction branch migration complex subunit RuvB.